An 86-amino-acid chain; its full sequence is Small ribosomal subunit protein uS15c (86 aa).

It belongs to the universal ribosomal protein uS15 family. In terms of assembly, part of the 30S ribosomal subunit.

The protein resides in the plastid. It is found in the chloroplast. This is Small ribosomal subunit protein uS15c (rps15) from Cryptomeria japonica (Japanese cedar).